The sequence spans 340 residues: Phosphoribosylformylglycinamidine cyclo-ligase (340 aa).

The protein belongs to the AIR synthase family.

The protein resides in the cytoplasm. The catalysed reaction is 2-formamido-N(1)-(5-O-phospho-beta-D-ribosyl)acetamidine + ATP = 5-amino-1-(5-phospho-beta-D-ribosyl)imidazole + ADP + phosphate + H(+). Its pathway is purine metabolism; IMP biosynthesis via de novo pathway; 5-amino-1-(5-phospho-D-ribosyl)imidazole from N(2)-formyl-N(1)-(5-phospho-D-ribosyl)glycinamide: step 2/2. The sequence is that of Phosphoribosylformylglycinamidine cyclo-ligase from Streptococcus agalactiae serotype Ia (strain ATCC 27591 / A909 / CDC SS700).